Consider the following 265-residue polypeptide: Asparagine-rich protein (265 aa).

The N-terminal stretch at 1 to 21 (MSRLTLLVLLVIAAVIQKVHG) is a signal peptide. 2 disordered regions span residues 20-71 (HGQG…NRNI) and 88-183 (SNQN…NQQY). Composition is skewed to basic and acidic residues over residues 22–35 (QGRE…HEPG) and 44–55 (EKTERNLREPNR). Residues 88–98 (SNQNNFGNNRS) show a composition bias toward low complexity. Basic and acidic residues predominate over residues 115–124 (NKSEVEKENG). Over residues 152-166 (KVQHRIAKRFQKRHP) the composition is skewed to basic residues.

In terms of tissue distribution, nacreous layer of shell (at protein level). Expressed primarily in the mantle with highest level in the mantle pallium and lower level in the mantle edge.

The protein localises to the secreted. In Pinctada maxima (Silver-lipped pearl oyster), this protein is Asparagine-rich protein.